The chain runs to 451 residues: tRNA modification GTPase MnmE (451 aa).

Arg25, Glu87, and Arg127 together coordinate (6S)-5-formyl-5,6,7,8-tetrahydrofolate. The TrmE-type G domain maps to 222-374 (GLRVALVGRP…FVQVLLERCG (153 aa)). Asn232 is a binding site for K(+). GTP-binding positions include 232-237 (NVGKSS), 251-257 (TELPGTT), and 276-279 (DTAG). Mg(2+) is bound at residue Ser236. Residues Thr251, Leu253, and Thr256 each contribute to the K(+) site. Residue Thr257 coordinates Mg(2+). Lys451 contributes to the (6S)-5-formyl-5,6,7,8-tetrahydrofolate binding site.

This sequence belongs to the TRAFAC class TrmE-Era-EngA-EngB-Septin-like GTPase superfamily. TrmE GTPase family. Homodimer. Heterotetramer of two MnmE and two MnmG subunits. The cofactor is K(+).

It is found in the cytoplasm. In terms of biological role, exhibits a very high intrinsic GTPase hydrolysis rate. Involved in the addition of a carboxymethylaminomethyl (cmnm) group at the wobble position (U34) of certain tRNAs, forming tRNA-cmnm(5)s(2)U34. The sequence is that of tRNA modification GTPase MnmE from Synechococcus sp. (strain CC9902).